We begin with the raw amino-acid sequence, 633 residues long: Phosphomethylpyrimidine synthase (633 aa).

Substrate-binding positions include Asn-245, Met-274, Tyr-303, His-339, 359–361, 400–403, and Glu-439; these read SRG and DGLR. His-443 provides a ligand contact to Zn(2+). Tyr-466 contacts substrate. Residue His-507 coordinates Zn(2+). Residues Cys-587, Cys-590, and Cys-595 each contribute to the [4Fe-4S] cluster site.

It belongs to the ThiC family. As to quaternary structure, homodimer. [4Fe-4S] cluster serves as cofactor.

It carries out the reaction 5-amino-1-(5-phospho-beta-D-ribosyl)imidazole + S-adenosyl-L-methionine = 4-amino-2-methyl-5-(phosphooxymethyl)pyrimidine + CO + 5'-deoxyadenosine + formate + L-methionine + 3 H(+). The protein operates within cofactor biosynthesis; thiamine diphosphate biosynthesis. Functionally, catalyzes the synthesis of the hydroxymethylpyrimidine phosphate (HMP-P) moiety of thiamine from aminoimidazole ribotide (AIR) in a radical S-adenosyl-L-methionine (SAM)-dependent reaction. The chain is Phosphomethylpyrimidine synthase from Neisseria meningitidis serogroup C (strain 053442).